Here is a 571-residue protein sequence, read N- to C-terminus: Septation ring formation regulator EzrA (571 aa).

Topologically, residues 1–3 are extracellular; the sequence is MYY. A helical membrane pass occupies residues 4-22; sequence MLIGFIIVVIAVIGAGYIL. At 23-571 the chain is on the cytoplasmic side; it reads KRKHYQRINE…ASKVSVDDIE (549 aa). 5 coiled-coil regions span residues 102 to 147, 248 to 298, 326 to 374, 400 to 437, and 478 to 529; these read ATNA…TKEK, LAQM…DTLE, DALA…ASGE, KFAE…ERER, and RIAE…ENHF.

Belongs to the EzrA family.

It is found in the cell membrane. Negative regulator of FtsZ ring formation; modulates the frequency and position of FtsZ ring formation. Inhibits FtsZ ring formation at polar sites. Interacts either with FtsZ or with one of its binding partners to promote depolymerization. This is Septation ring formation regulator EzrA from Listeria monocytogenes serotype 4a (strain HCC23).